Here is a 680-residue protein sequence, read N- to C-terminus: DNA-directed RNA polymerase subunit beta' (680 aa).

Residues Cys69, Cys71, Cys87, and Cys90 each coordinate Zn(2+). Residues Asp489, Asp491, and Asp493 each contribute to the Mg(2+) site.

The protein belongs to the RNA polymerase beta' chain family. RpoC1 subfamily. As to quaternary structure, in plastids the minimal PEP RNA polymerase catalytic core is composed of four subunits: alpha, beta, beta', and beta''. When a (nuclear-encoded) sigma factor is associated with the core the holoenzyme is formed, which can initiate transcription. Requires Mg(2+) as cofactor. Zn(2+) is required as a cofactor.

It is found in the plastid. The protein localises to the chloroplast. It catalyses the reaction RNA(n) + a ribonucleoside 5'-triphosphate = RNA(n+1) + diphosphate. DNA-dependent RNA polymerase catalyzes the transcription of DNA into RNA using the four ribonucleoside triphosphates as substrates. In Olimarabidopsis pumila (Dwarf rocket), this protein is DNA-directed RNA polymerase subunit beta'.